Here is a 106-residue protein sequence, read N- to C-terminus: Putative regulatory protein MalR (106 aa).

The HTH hxlR-type domain maps to 12–106 (CSIEYTLSFM…NLMHKWGQEN (95 aa)).

Its function is as follows. Potential regulator of the malBH genes. This Fusobacterium mortiferum protein is Putative regulatory protein MalR (malR).